The chain runs to 269 residues: Diaminopimelate epimerase (269 aa).

Substrate-binding residues include asparagine 13, glutamine 47, and asparagine 65. Cysteine 74 acts as the Proton donor in catalysis. Residues 75–76 (GN), asparagine 149, asparagine 182, and 200–201 (ER) contribute to the substrate site. Cysteine 209 (proton acceptor) is an active-site residue. 210-211 (GT) is a binding site for substrate.

This sequence belongs to the diaminopimelate epimerase family. As to quaternary structure, homodimer.

Its subcellular location is the cytoplasm. It catalyses the reaction (2S,6S)-2,6-diaminopimelate = meso-2,6-diaminopimelate. It participates in amino-acid biosynthesis; L-lysine biosynthesis via DAP pathway; DL-2,6-diaminopimelate from LL-2,6-diaminopimelate: step 1/1. Its function is as follows. Catalyzes the stereoinversion of LL-2,6-diaminopimelate (L,L-DAP) to meso-diaminopimelate (meso-DAP), a precursor of L-lysine and an essential component of the bacterial peptidoglycan. In Erythrobacter litoralis (strain HTCC2594), this protein is Diaminopimelate epimerase.